Reading from the N-terminus, the 108-residue chain is Ig light chain C region (108 aa).

The Ig-like domain maps to 7 to 102 (PTVSIYCPSL…LTPALAKSFQ (96 aa)). Intrachain disulfides connect Cys-13-Cys-106 and Cys-28-Cys-86.

The sequence is that of Ig light chain C region from Aquarana catesbeiana (American bullfrog).